The sequence spans 138 residues: MTKPIPRIGSRRSGRIGSRKAGRRIPKGVIHVQASFNNTIVTVTDVRGRVVSWSSAGTCGFKGTRRGTPFAAQTAAGNAIRTVVDQGMQRAEVMIKGPGLGRDAALRAIRRSGLLLSFVRDVTPMPHNGCRPPKKRRV.

Residues 1 to 22 (MTKPIPRIGSRRSGRIGSRKAG) are disordered. Positions 9 to 22 (GSRRSGRIGSRKAG) are enriched in basic residues.

The protein belongs to the universal ribosomal protein uS11 family. As to quaternary structure, part of the 30S ribosomal subunit.

It is found in the plastid. The protein localises to the chloroplast. This Piper cenocladum (Ant piper) protein is Small ribosomal subunit protein uS11c.